Consider the following 427-residue polypeptide: Serine--tRNA ligase (427 aa).

Residue 229 to 231 (TAE) coordinates L-serine. Position 260-262 (260-262 (RSE)) interacts with ATP. L-serine is bound at residue glutamate 283. ATP is bound at residue 347–350 (EISS). Serine 383 contacts L-serine.

The protein belongs to the class-II aminoacyl-tRNA synthetase family. Type-1 seryl-tRNA synthetase subfamily. Homodimer. The tRNA molecule binds across the dimer.

It is found in the cytoplasm. The enzyme catalyses tRNA(Ser) + L-serine + ATP = L-seryl-tRNA(Ser) + AMP + diphosphate + H(+). It carries out the reaction tRNA(Sec) + L-serine + ATP = L-seryl-tRNA(Sec) + AMP + diphosphate + H(+). It functions in the pathway aminoacyl-tRNA biosynthesis; selenocysteinyl-tRNA(Sec) biosynthesis; L-seryl-tRNA(Sec) from L-serine and tRNA(Sec): step 1/1. In terms of biological role, catalyzes the attachment of serine to tRNA(Ser). Is also able to aminoacylate tRNA(Sec) with serine, to form the misacylated tRNA L-seryl-tRNA(Sec), which will be further converted into selenocysteinyl-tRNA(Sec). In Nitrosococcus oceani (strain ATCC 19707 / BCRC 17464 / JCM 30415 / NCIMB 11848 / C-107), this protein is Serine--tRNA ligase.